We begin with the raw amino-acid sequence, 486 residues long: Malonate-semialdehyde dehydrogenase 1 (486 aa).

The NAD(+) site is built by Phe154, Lys178, Glu181, Arg182, and Ser231. The active-site Nucleophile is Cys286. Glu386 lines the NAD(+) pocket.

It belongs to the aldehyde dehydrogenase family. IolA subfamily. Homotetramer.

The enzyme catalyses 3-oxopropanoate + NAD(+) + CoA + H2O = hydrogencarbonate + acetyl-CoA + NADH + H(+). The catalysed reaction is 2-methyl-3-oxopropanoate + NAD(+) + CoA + H2O = propanoyl-CoA + hydrogencarbonate + NADH + H(+). Its pathway is polyol metabolism; myo-inositol degradation into acetyl-CoA; acetyl-CoA from myo-inositol: step 7/7. Its function is as follows. Catalyzes the oxidation of malonate semialdehyde (MSA) and methylmalonate semialdehyde (MMSA) into acetyl-CoA and propanoyl-CoA, respectively. Is involved in a myo-inositol catabolic pathway. Bicarbonate, and not CO2, is the end-product of the enzymatic reaction. The polypeptide is Malonate-semialdehyde dehydrogenase 1 (Oceanobacillus iheyensis (strain DSM 14371 / CIP 107618 / JCM 11309 / KCTC 3954 / HTE831)).